Consider the following 281-residue polypeptide: uncharacterized protein (281 aa).

The next 8 helical transmembrane spans lie at 30–50 (AIVA…FIVI), 54–74 (VFIS…GYYF), 76–96 (FNPL…MGWV), 106–126 (TLIG…IDLT), 153–173 (AGLD…FLAI), 198–218 (IALT…IALL), 235–255 (MMAV…ALSY), and 259–279 (LSSG…SLAF).

This sequence belongs to the ABC-3 integral membrane protein family.

The protein resides in the cell membrane. This is an uncharacterized protein from Synechocystis sp. (strain ATCC 27184 / PCC 6803 / Kazusa).